Here is a 339-residue protein sequence, read N- to C-terminus: Anthranilate phosphoribosyltransferase (339 aa).

Residues Gly81, Gly84–Asp85, Asn91–Thr94, Lys109–Ser117, and Ser121 contribute to the 5-phospho-alpha-D-ribose 1-diphosphate site. Position 81 (Gly81) interacts with anthranilate. Ser93 is a Mg(2+) binding site. Asn112 contributes to the anthranilate binding site. Arg167 contributes to the anthranilate binding site. Residues Asp226 and Glu227 each coordinate Mg(2+).

This sequence belongs to the anthranilate phosphoribosyltransferase family. In terms of assembly, homodimer. Requires Mg(2+) as cofactor.

The catalysed reaction is N-(5-phospho-beta-D-ribosyl)anthranilate + diphosphate = 5-phospho-alpha-D-ribose 1-diphosphate + anthranilate. It participates in amino-acid biosynthesis; L-tryptophan biosynthesis; L-tryptophan from chorismate: step 2/5. In terms of biological role, catalyzes the transfer of the phosphoribosyl group of 5-phosphorylribose-1-pyrophosphate (PRPP) to anthranilate to yield N-(5'-phosphoribosyl)-anthranilate (PRA). The polypeptide is Anthranilate phosphoribosyltransferase (Maricaulis maris (strain MCS10) (Caulobacter maris)).